Consider the following 293-residue polypeptide: 4-hydroxy-tetrahydrodipicolinate synthase (293 aa).

Threonine 44 contacts pyruvate. The Proton donor/acceptor role is filled by tyrosine 132. Lysine 161 acts as the Schiff-base intermediate with substrate in catalysis. Isoleucine 205 contributes to the pyruvate binding site.

This sequence belongs to the DapA family. As to quaternary structure, homotetramer; dimer of dimers.

It is found in the cytoplasm. It carries out the reaction L-aspartate 4-semialdehyde + pyruvate = (2S,4S)-4-hydroxy-2,3,4,5-tetrahydrodipicolinate + H2O + H(+). Its pathway is amino-acid biosynthesis; L-lysine biosynthesis via DAP pathway; (S)-tetrahydrodipicolinate from L-aspartate: step 3/4. Its function is as follows. Catalyzes the condensation of (S)-aspartate-beta-semialdehyde [(S)-ASA] and pyruvate to 4-hydroxy-tetrahydrodipicolinate (HTPA). The chain is 4-hydroxy-tetrahydrodipicolinate synthase from Thermosipho africanus (strain TCF52B).